Consider the following 332-residue polypeptide: Holliday junction branch migration complex subunit RuvB (332 aa).

The interval 1 to 181 (MSRILDNEIM…FGITGHMEYY (181 aa)) is large ATPase domain (RuvB-L). Residues leucine 20, arginine 21, glycine 62, lysine 65, threonine 66, threonine 67, 128–130 (EDF), arginine 171, tyrosine 181, and arginine 218 each bind ATP. A Mg(2+)-binding site is contributed by threonine 66. A small ATPAse domain (RuvB-S) region spans residues 182 to 252 (AHADLTEIVE…ITDKALTMLD (71 aa)). Residues 255–332 (HEGLDYVDQK…EHLGYEYSEK (78 aa)) are head domain (RuvB-H). Positions 291, 310, 312, and 315 each coordinate DNA.

Belongs to the RuvB family. Homohexamer. Forms an RuvA(8)-RuvB(12)-Holliday junction (HJ) complex. HJ DNA is sandwiched between 2 RuvA tetramers; dsDNA enters through RuvA and exits via RuvB. An RuvB hexamer assembles on each DNA strand where it exits the tetramer. Each RuvB hexamer is contacted by two RuvA subunits (via domain III) on 2 adjacent RuvB subunits; this complex drives branch migration. In the full resolvosome a probable DNA-RuvA(4)-RuvB(12)-RuvC(2) complex forms which resolves the HJ.

Its subcellular location is the cytoplasm. It carries out the reaction ATP + H2O = ADP + phosphate + H(+). In terms of biological role, the RuvA-RuvB-RuvC complex processes Holliday junction (HJ) DNA during genetic recombination and DNA repair, while the RuvA-RuvB complex plays an important role in the rescue of blocked DNA replication forks via replication fork reversal (RFR). RuvA specifically binds to HJ cruciform DNA, conferring on it an open structure. The RuvB hexamer acts as an ATP-dependent pump, pulling dsDNA into and through the RuvAB complex. RuvB forms 2 homohexamers on either side of HJ DNA bound by 1 or 2 RuvA tetramers; 4 subunits per hexamer contact DNA at a time. Coordinated motions by a converter formed by DNA-disengaged RuvB subunits stimulates ATP hydrolysis and nucleotide exchange. Immobilization of the converter enables RuvB to convert the ATP-contained energy into a lever motion, pulling 2 nucleotides of DNA out of the RuvA tetramer per ATP hydrolyzed, thus driving DNA branch migration. The RuvB motors rotate together with the DNA substrate, which together with the progressing nucleotide cycle form the mechanistic basis for DNA recombination by continuous HJ branch migration. Branch migration allows RuvC to scan DNA until it finds its consensus sequence, where it cleaves and resolves cruciform DNA. This Streptococcus pneumoniae serotype 2 (strain D39 / NCTC 7466) protein is Holliday junction branch migration complex subunit RuvB.